Reading from the N-terminus, the 190-residue chain is B3 domain-containing protein At1g49475 (190 aa).

Residues 1–27 (MRNMHTNRRSPGPITSAATQRRLKPEP) are disordered. Positions 33-125 (KFIKIILLSR…CFRVVIFDVS (93 aa)) form a DNA-binding region, TF-B3.

Its subcellular location is the nucleus. The chain is B3 domain-containing protein At1g49475 from Arabidopsis thaliana (Mouse-ear cress).